We begin with the raw amino-acid sequence, 905 residues long: DNA gyrase subunit A (905 aa).

One can recognise a Topo IIA-type catalytic domain in the interval 35–524; that stretch reads IPDVRDGLKP…GEFDQDIEDL (490 aa). Tyr123 (O-(5'-phospho-DNA)-tyrosine intermediate) is an active-site residue. A GyrA-box motif is present at residues 551-557; that stretch reads QKRGGKG. Residues 885 to 905 are disordered; sequence TAESEEDSELEEEGLEQSEEV. Acidic residues predominate over residues 886–905; sequence AESEEDSELEEEGLEQSEEV.

It belongs to the type II topoisomerase GyrA/ParC subunit family. Heterotetramer, composed of two GyrA and two GyrB chains. In the heterotetramer, GyrA contains the active site tyrosine that forms a transient covalent intermediate with DNA, while GyrB binds cofactors and catalyzes ATP hydrolysis.

The protein localises to the cytoplasm. The catalysed reaction is ATP-dependent breakage, passage and rejoining of double-stranded DNA.. In terms of biological role, a type II topoisomerase that negatively supercoils closed circular double-stranded (ds) DNA in an ATP-dependent manner to modulate DNA topology and maintain chromosomes in an underwound state. Negative supercoiling favors strand separation, and DNA replication, transcription, recombination and repair, all of which involve strand separation. Also able to catalyze the interconversion of other topological isomers of dsDNA rings, including catenanes and knotted rings. Type II topoisomerases break and join 2 DNA strands simultaneously in an ATP-dependent manner. The polypeptide is DNA gyrase subunit A (Rickettsia conorii (strain ATCC VR-613 / Malish 7)).